The chain runs to 171 residues: 3-hydroxydecanoyl-[acyl-carrier-protein] dehydratase (171 aa).

Residue His-70 is part of the active site.

It belongs to the thioester dehydratase family. FabA subfamily. In terms of assembly, homodimer.

The protein resides in the cytoplasm. It catalyses the reaction a (3R)-hydroxyacyl-[ACP] = a (2E)-enoyl-[ACP] + H2O. The enzyme catalyses (3R)-hydroxydecanoyl-[ACP] = (2E)-decenoyl-[ACP] + H2O. It carries out the reaction (2E)-decenoyl-[ACP] = (3Z)-decenoyl-[ACP]. It functions in the pathway lipid metabolism; fatty acid biosynthesis. Its function is as follows. Necessary for the introduction of cis unsaturation into fatty acids. Catalyzes the dehydration of (3R)-3-hydroxydecanoyl-ACP to E-(2)-decenoyl-ACP and then its isomerization to Z-(3)-decenoyl-ACP. Can catalyze the dehydratase reaction for beta-hydroxyacyl-ACPs with saturated chain lengths up to 16:0, being most active on intermediate chain length. The protein is 3-hydroxydecanoyl-[acyl-carrier-protein] dehydratase of Pseudoalteromonas translucida (strain TAC 125).